The primary structure comprises 456 residues: Choline kinase (456 aa).

It belongs to the choline/ethanolamine kinase family. Monomer. Mg(2+) serves as cofactor.

Its subcellular location is the cytoplasm. The protein localises to the nucleus. It catalyses the reaction choline + ATP = phosphocholine + ADP + H(+). It participates in phospholipid metabolism; phosphatidylcholine biosynthesis; phosphocholine from choline: step 1/1. Catalyzes the committed step in the synthesis of phosphatidylcholine by the CDP-choline pathway. The chain is Choline kinase from Schizosaccharomyces pombe (strain 972 / ATCC 24843) (Fission yeast).